Consider the following 529-residue polypeptide: MFS glucose transporter mfs1 (529 aa).

The next 12 membrane-spanning stretches (helical) occupy residues 7–27 (VYFLCGFATLGGGLFGFDISS), 52–72 (SITCAMPFGSLVGALCSSFIA), 86–106 (ILWIIGSIFMCASNGIPLLVV), 109–129 (VIAGGCVGIASAMVPVYQAEI), 138–158 (VISLQQWAITWGILIQYFIQY), 179–199 (IPWGIQIVPGVILFFGMFLFP), 272–292 (LQMWSQLCGMNVMMYYIVYIM), 301–321 (LLTASIQYILNTALTLPAIIY), 330–350 (AILIGFFLQAIFLYLEGGLQG), 375–395 (AVGKAIIALSYLFVCSFATTI), 415–439 (AVSLATASNWIWNCLLALFVPPLLW), and 446–464 (YMIFAAFNTAAFIHMFLTA).

Belongs to the major facilitator superfamily. Sugar transporter (TC 2.A.1.1) family.

It localises to the membrane. Functionally, probable MFS glucose transporter; part of the gene cluster 27 that mediates the biosynthesis of asparasone A, a sclerotium-specific anthraquinone pigment important for sclerotial survival. The polypeptide is MFS glucose transporter mfs1 (Aspergillus flavus (strain ATCC 200026 / FGSC A1120 / IAM 13836 / NRRL 3357 / JCM 12722 / SRRC 167)).